Here is a 1334-residue protein sequence, read N- to C-terminus: Aldehyde oxidase 1 (1334 aa).

The 2Fe-2S ferredoxin-type domain occupies 5 to 92 (PELLFYVNGR…GAAVTTVEGI (88 aa)). Residues Cys44, Cys49, Cys52, and Cys74 each coordinate [2Fe-2S] cluster. Gln113 serves as a coordination point for Mo-molybdopterin. 4 residues coordinate [2Fe-2S] cluster: Cys114, Cys117, Cys149, and Cys151. Position 151 (Cys151) interacts with Mo-molybdopterin. One can recognise an FAD-binding PCMH-type domain in the interval 236–421 (FSGERMMWIS…ASVHIPYSRK (186 aa)). FAD-binding positions include 264 to 271 (VVMGNTSV), Ala345, Ser354, His358, Asp367, and Leu411. Residues 802–803 (AF) and Met1043 each bind Mo-molybdopterin. Ser1064 bears the Phosphoserine mark. Mo-molybdopterin contacts are provided by residues 1084 to 1087 (GSVV), Gln1199, and Leu1264. Glu1266 functions as the Proton acceptor; for azaheterocycle hydroxylase activity in the catalytic mechanism.

The protein belongs to the xanthine dehydrogenase family. As to quaternary structure, homodimer. Requires [2Fe-2S] cluster as cofactor. It depends on FAD as a cofactor. The cofactor is Mo-molybdopterin. In terms of processing, the N-terminus is blocked. Very high expression in liver and lung. High expression in kidney, pancreas, brain stem and spinal cord. Moderate expression in heart, testis, eye, cerebral cortex and cerebellum. Low expression in stomach and muscle.

The protein localises to the cytoplasm. The enzyme catalyses an aldehyde + O2 + H2O = a carboxylate + H2O2 + H(+). The catalysed reaction is retinal + O2 + H2O = retinoate + H2O2 + H(+). It catalyses the reaction all-trans-retinal + O2 + H2O = all-trans-retinoate + H2O2 + H(+). With respect to regulation, inhibited by hydralazine and menadione. Not inhibited by BOF-4272 or allopurinol, xanthine dehydrogenase potent inhibitors. In contrast to guinea pig, human and rat, isovanillin is not an inhibitor but a substrate for AOX1 in rabbit. Oxidase with broad substrate specificity, oxidizing aromatic azaheterocycles, such as N1-methylnicotinamide, N-methylphthalazinium and phthalazine, as well as aldehydes, such as benzaldehyde, retinal, pyridoxal, and vanillin. Plays a key role in the metabolism of xenobiotics and drugs containing aromatic azaheterocyclic substituents. Participates in the bioactivation of prodrugs such as famciclovir, catalyzing the oxidation step from 6-deoxypenciclovir to penciclovir, which is a potent antiviral agent. Is probably involved in the regulation of reactive oxygen species homeostasis. May be a prominent source of superoxide generation via the one-electron reduction of molecular oxygen. May also catalyze nitric oxide (NO) production via the reduction of nitrite to NO with NADH or aldehyde as electron donor. May play a role in adipogenesis. Cannot use hypoxanthine and all-trans-retinol as substrate. The protein is Aldehyde oxidase 1 of Oryctolagus cuniculus (Rabbit).